Reading from the N-terminus, the 448-residue chain is Exodeoxyribonuclease 7 large subunit (448 aa).

Belongs to the XseA family. As to quaternary structure, heterooligomer composed of large and small subunits.

It localises to the cytoplasm. The enzyme catalyses Exonucleolytic cleavage in either 5'- to 3'- or 3'- to 5'-direction to yield nucleoside 5'-phosphates.. Bidirectionally degrades single-stranded DNA into large acid-insoluble oligonucleotides, which are then degraded further into small acid-soluble oligonucleotides. This is Exodeoxyribonuclease 7 large subunit from Bacillus pumilus (strain SAFR-032).